Consider the following 343-residue polypeptide: Uroporphyrinogen decarboxylase (343 aa).

Substrate-binding positions include 25–29 (RQAGR), aspartate 75, tyrosine 152, serine 207, and histidine 323.

The protein belongs to the uroporphyrinogen decarboxylase family. As to quaternary structure, homodimer.

The protein resides in the cytoplasm. It catalyses the reaction uroporphyrinogen III + 4 H(+) = coproporphyrinogen III + 4 CO2. Its pathway is porphyrin-containing compound metabolism; protoporphyrin-IX biosynthesis; coproporphyrinogen-III from 5-aminolevulinate: step 4/4. Functionally, catalyzes the decarboxylation of four acetate groups of uroporphyrinogen-III to yield coproporphyrinogen-III. The polypeptide is Uroporphyrinogen decarboxylase (Jannaschia sp. (strain CCS1)).